A 523-amino-acid chain; its full sequence is Apoptosis inhibitor 5 (523 aa).

The interval 1–360 (MPTVEELYRN…HQLGRKLPDF (360 aa)) is ARM-like and Heat-like helical repeats. Residues 446 to 523 (VQKADANQKR…RGNRSRGRIY (78 aa)) form a disordered region. The short motif at 454–475 (KRTSEDTTSSSPPKKASAGPKR) is the Nuclear localization signal element. Residues 460 to 471 (TTSSSPPKKASA) are compositionally biased toward low complexity. Positions 487-497 (KYSSNLGSFSY) are enriched in polar residues. The span at 502 to 515 (GFRGGRGRGWGGRG) shows a compositional bias: gly residues.

The protein belongs to the API5 family. As to quaternary structure, monomer.

It is found in the nucleus. Its subcellular location is the cytoplasm. Its function is as follows. Antiapoptotic factor that may have a role in protein assembly. The chain is Apoptosis inhibitor 5 (API5) from Gallus gallus (Chicken).